Here is a 405-residue protein sequence, read N- to C-terminus: uncharacterized protein (405 aa).

10 helical membrane-spanning segments follow: residues 9–29, 41–61, 74–94, 98–118, 138–158, 168–190, 227–247, 252–272, 291–311, and 373–393; these read VFAL…VTIV, VFLA…ASFC, VLAG…YSVT, QAFF…GAFF, ANGV…GLGG, LVVG…LHVN, ALAG…AVLH, WWGM…VIAI, LVMS…LCAL, and IAFI…LAQP.

This sequence belongs to the major facilitator superfamily. Drug:H(+) antiporter-3 (DHA3) (TC 2.A.1.21) family.

The protein localises to the cell membrane. This is an uncharacterized protein from Bacillus subtilis (strain 168).